The following is a 147-amino-acid chain: Small ribosomal subunit protein uS12 (147 aa).

It belongs to the universal ribosomal protein uS12 family. In terms of assembly, part of the 30S ribosomal subunit.

Functionally, with S4 and S5 plays an important role in translational accuracy. Located at the interface of the 30S and 50S subunits. The protein is Small ribosomal subunit protein uS12 of Saccharolobus solfataricus (strain ATCC 35092 / DSM 1617 / JCM 11322 / P2) (Sulfolobus solfataricus).